Here is a 238-residue protein sequence, read N- to C-terminus: Ditrans,polycis-undecaprenyl-diphosphate synthase ((2E,6E)-farnesyl-diphosphate specific) (238 aa).

Residue Asp-14 is part of the active site. Asp-14 is a Mg(2+) binding site. Residues 15–18 (GNGR), Trp-19, Arg-27, His-31, and 59–61 (SSE) each bind substrate. Residue Asn-62 is the Proton acceptor of the active site. Substrate is bound by residues Trp-63, Arg-65, Arg-182, and 188-190 (RIS). Position 201 (Glu-201) interacts with Mg(2+).

It belongs to the UPP synthase family. In terms of assembly, homodimer. Mg(2+) is required as a cofactor.

It carries out the reaction 8 isopentenyl diphosphate + (2E,6E)-farnesyl diphosphate = di-trans,octa-cis-undecaprenyl diphosphate + 8 diphosphate. Catalyzes the sequential condensation of isopentenyl diphosphate (IPP) with (2E,6E)-farnesyl diphosphate (E,E-FPP) to yield (2Z,6Z,10Z,14Z,18Z,22Z,26Z,30Z,34E,38E)-undecaprenyl diphosphate (di-trans,octa-cis-UPP). UPP is the precursor of glycosyl carrier lipid in the biosynthesis of bacterial cell wall polysaccharide components such as peptidoglycan and lipopolysaccharide. The protein is Ditrans,polycis-undecaprenyl-diphosphate synthase ((2E,6E)-farnesyl-diphosphate specific) of Legionella pneumophila (strain Paris).